A 405-amino-acid polypeptide reads, in one-letter code: MEIILGIVMFTVIVLVLALMILFAKSKLVSEGDITIKVNGEKELTMPAGGKLLGALANEGIFIPSACGGGGSCGQCRVVVKSGGGDILPTELSHISKREAREGCRLSCQVNVKTDMDIEVPEEVFGVKKWECTVISNDNKATFIKELKLAIPEGEEVPFRAGGYIQIEAPPHTVAYKDFDIPKEYHEDWDKYNLWQYVSKVDEPILRAYSMASYPEEKGIIMLNVRIATPPPRVPDAPPGQMSSYIWSLKPGDKVTISGPFGEFFAKDTDAEMVFIGGGAGMAPMRSHIFDQLKRLNSKRKITFWYGARSKREMFYVEDFDQLAAEFPNFTWHVALSDPLPEDNWDGYTGFIHNVVYENHLKNHEAPEDCEFYMCGPPIMNQSVIKMLKDLGVEDENILLDDFGG.

The helical transmembrane segment at 3–23 (IILGIVMFTVIVLVLALMILF) threads the bilayer. The region spanning 32-124 (GDITIKVNGE…DMDIEVPEEV (93 aa)) is the 2Fe-2S ferredoxin-type domain. The [2Fe-2S] cluster site is built by C67, C73, C76, and C108. One can recognise an FAD-binding FR-type domain in the interval 127–267 (VKKWECTVIS…SGPFGEFFAK (141 aa)). The catalytic stretch occupies residues 270–387 (DAEMVFIGGG…PIMNQSVIKM (118 aa)).

The protein belongs to the NqrF family. Composed of six subunits; NqrA, NqrB, NqrC, NqrD, NqrE and NqrF. [2Fe-2S] cluster serves as cofactor. Requires FAD as cofactor.

The protein localises to the cell inner membrane. The catalysed reaction is a ubiquinone + n Na(+)(in) + NADH + H(+) = a ubiquinol + n Na(+)(out) + NAD(+). In terms of biological role, NQR complex catalyzes the reduction of ubiquinone-1 to ubiquinol by two successive reactions, coupled with the transport of Na(+) ions from the cytoplasm to the periplasm. The first step is catalyzed by NqrF, which accepts electrons from NADH and reduces ubiquinone-1 to ubisemiquinone by a one-electron transfer pathway. This chain is Na(+)-translocating NADH-quinone reductase subunit F, found in Neisseria meningitidis serogroup B (strain ATCC BAA-335 / MC58).